The chain runs to 169 residues: Fumarase E (169 aa).

Belongs to the MtlR/FumE family. In terms of assembly, homodimer.

The enzyme catalyses (S)-malate = fumarate + H2O. In vitro catalyzes the addition of water to fumarate, forming malate. Cannot catalyze the reverse reaction. Cannot use the cis-isomer maleate as substrate. The chain is Fumarase E from Shigella flexneri.